The following is a 277-amino-acid chain: MSVPTVLERIIARKFQEVAERSARVSLAELERLAKTADAPRGFANALIEQAKRKQPAVIAEIKKASPSKGVIREHFVPAEIAVSYEKGGATCLSVLTDVDYFQGADEYLQQARAAVSLPVIRKDFMVDPYQIVEARALGADCVLLIVSALDDVKMAELAATAKDVGLDVLVEVHDGDELERALKTLDTPLVGVNNRNLHTFEVSLETTLDLLPRIPRDRLAITESGILNRADVELMAINEVYSFLVGEAFMRAEQPGLELQRLFFPEQVKKTVQPLD.

This sequence belongs to the TrpC family.

It carries out the reaction 1-(2-carboxyphenylamino)-1-deoxy-D-ribulose 5-phosphate + H(+) = (1S,2R)-1-C-(indol-3-yl)glycerol 3-phosphate + CO2 + H2O. It participates in amino-acid biosynthesis; L-tryptophan biosynthesis; L-tryptophan from chorismate: step 4/5. The chain is Indole-3-glycerol phosphate synthase (trpC) from Pseudomonas putida (Arthrobacter siderocapsulatus).